The chain runs to 496 residues: Probable cytosol aminopeptidase (496 aa).

Mn(2+)-binding residues include K258 and D263. K270 is an active-site residue. Residues D281, D340, and E342 each contribute to the Mn(2+) site. R344 is an active-site residue.

The protein belongs to the peptidase M17 family. The cofactor is Mn(2+).

It localises to the cytoplasm. It catalyses the reaction Release of an N-terminal amino acid, Xaa-|-Yaa-, in which Xaa is preferably Leu, but may be other amino acids including Pro although not Arg or Lys, and Yaa may be Pro. Amino acid amides and methyl esters are also readily hydrolyzed, but rates on arylamides are exceedingly low.. The catalysed reaction is Release of an N-terminal amino acid, preferentially leucine, but not glutamic or aspartic acids.. Its function is as follows. Presumably involved in the processing and regular turnover of intracellular proteins. Catalyzes the removal of unsubstituted N-terminal amino acids from various peptides. This is Probable cytosol aminopeptidase from Helicobacter pylori (strain Shi470).